The chain runs to 1093 residues: Mediator of RNA polymerase II transcription subunit 14 (1093 aa).

Disordered regions lie at residues 1-62 (MPGV…IDGH) and 1034-1065 (ETKS…ANDT). Polar residues predominate over residues 19-31 (DTQTPSNGDNLRN). The segment covering 41–62 (KGDKDHDPDKESYAGKPRIDGH) has biased composition (basic and acidic residues). Residues 1040–1056 (DYSTQPAPENQSQTGAP) show a composition bias toward polar residues.

It belongs to the Mediator complex subunit 14 family. In terms of assembly, component of the Mediator complex.

The protein localises to the nucleus. Functionally, component of the Mediator complex, a coactivator involved in the regulated transcription of nearly all RNA polymerase II-dependent genes. Mediator functions as a bridge to convey information from gene-specific regulatory proteins to the basal RNA polymerase II transcription machinery. Mediator is recruited to promoters by direct interactions with regulatory proteins and serves as a scaffold for the assembly of a functional preinitiation complex with RNA polymerase II and the general transcription factors. The protein is Mediator of RNA polymerase II transcription subunit 14 (rgr1) of Aspergillus fumigatus (strain ATCC MYA-4609 / CBS 101355 / FGSC A1100 / Af293) (Neosartorya fumigata).